Here is a 195-residue protein sequence, read N- to C-terminus: Auxin-responsive protein IAA14 (195 aa).

Disordered regions lie at residues 1–61 (MAAE…SPAS) and 85–107 (STAAAAKGKGGGETDQGRKNKGG). Residues 10–14 (LRLGL) carry the EAR-like (transcriptional repression) motif. Residues 108 to 191 (GLYVKVSMDG…SCKKLRIMRG (84 aa)) enclose the PB1 domain.

The protein belongs to the Aux/IAA family. As to quaternary structure, homodimers and heterodimers. In terms of tissue distribution, highly expressed in flowers. Expressed in etiolated seedlings.

The protein resides in the nucleus. In terms of biological role, aux/IAA proteins are short-lived transcriptional factors that function as repressors of early auxin response genes at low auxin concentrations. The chain is Auxin-responsive protein IAA14 (IAA14) from Oryza sativa subsp. japonica (Rice).